The sequence spans 120 residues: NAD(P)H-quinone oxidoreductase subunit 3, chloroplastic (120 aa).

Helical transmembrane passes span 3–23 (ILEG…IPVI), 64–84 (MFAL…PWAV), and 89–109 (LGLS…IGLV).

The protein belongs to the complex I subunit 3 family. In terms of assembly, NDH is composed of at least 16 different subunits, 5 of which are encoded in the nucleus.

The protein resides in the plastid. The protein localises to the chloroplast thylakoid membrane. It catalyses the reaction a plastoquinone + NADH + (n+1) H(+)(in) = a plastoquinol + NAD(+) + n H(+)(out). The catalysed reaction is a plastoquinone + NADPH + (n+1) H(+)(in) = a plastoquinol + NADP(+) + n H(+)(out). In terms of biological role, NDH shuttles electrons from NAD(P)H:plastoquinone, via FMN and iron-sulfur (Fe-S) centers, to quinones in the photosynthetic chain and possibly in a chloroplast respiratory chain. The immediate electron acceptor for the enzyme in this species is believed to be plastoquinone. Couples the redox reaction to proton translocation, and thus conserves the redox energy in a proton gradient. The polypeptide is NAD(P)H-quinone oxidoreductase subunit 3, chloroplastic (Nephroselmis olivacea (Green alga)).